A 526-amino-acid polypeptide reads, in one-letter code: NAD(P)H-quinone oxidoreductase chain 4 (526 aa).

Transmembrane regions (helical) follow at residues 5 to 25 (FPWL…VPLI), 32 to 52 (WYSF…FFTS), 87 to 107 (LILL…PVTL), 111 to 131 (MFHF…AVQD), 133 to 153 (VLFF…LAIW), 165 to 185 (FILY…AMYF), 211 to 231 (FLGL…HTWL), 239 to 259 (TAPV…YALI), 273 to 293 (FAPL…LTSF), 302 to 320 (IAYS…VGSL), 331 to 351 (QMIS…ATYD), 371 to 393 (IFAM…GFVA), and 414 to 434 (LVVL…LSML).

This sequence belongs to the complex I subunit 4 family.

It is found in the cell inner membrane. It carries out the reaction a plastoquinone + NADH + (n+1) H(+)(in) = a plastoquinol + NAD(+) + n H(+)(out). It catalyses the reaction a plastoquinone + NADPH + (n+1) H(+)(in) = a plastoquinol + NADP(+) + n H(+)(out). In terms of biological role, NDH-1 shuttles electrons from NAD(P)H, via FMN and iron-sulfur (Fe-S) centers, to quinones in the respiratory chain. The immediate electron acceptor for the enzyme in this species is believed to be plastoquinone. Couples the redox reaction to proton translocation (for every two electrons transferred, four hydrogen ions are translocated across the cytoplasmic membrane), and thus conserves the redox energy in a proton gradient. This is NAD(P)H-quinone oxidoreductase chain 4 from Gloeobacter violaceus (strain ATCC 29082 / PCC 7421).